We begin with the raw amino-acid sequence, 1091 residues long: Self-sufficient cytochrome P450 monooxygenase CYP505E1 (1091 aa).

Cys433 provides a ligand contact to heme. The region spanning 528-669 (ICFFYGSNSG…DLEAWEETSL (142 aa)) is the Flavodoxin-like domain. FMN is bound by residues 534–538 (SNSGT) and 613–645 (VFGCGHHDWTQTFYRIPTLIDELMHKAGATRLA). An FAD-binding FR-type domain is found at 707–935 (KDLMEARVTT…RPAKEAFHLP (229 aa)).

In the N-terminal section; belongs to the cytochrome P450 family. Requires FAD as cofactor. It depends on FMN as a cofactor. Heme serves as cofactor.

It carries out the reaction 2 oxidized [cytochrome P450] + NADPH = 2 reduced [cytochrome P450] + NADP(+) + H(+). The catalysed reaction is an organic molecule + reduced [NADPH--hemoprotein reductase] + O2 = an alcohol + oxidized [NADPH--hemoprotein reductase] + H2O + H(+). It catalyses the reaction dodecanoate + reduced [NADPH--hemoprotein reductase] + O2 = 5-hydroxydodecanoate + oxidized [NADPH--hemoprotein reductase] + H2O + H(+). The enzyme catalyses tetradecanoate + reduced [NADPH--hemoprotein reductase] + O2 = 7-hydroxytetradecanoate + oxidized [NADPH--hemoprotein reductase] + H2O + H(+). It carries out the reaction dodecan-1-ol + reduced [NADPH--hemoprotein reductase] + O2 = 1,5-dodecanediol + oxidized [NADPH--hemoprotein reductase] + H2O + H(+). The catalysed reaction is dodecan-1-ol + reduced [NADPH--hemoprotein reductase] + O2 = 1,4-dodecanediol + oxidized [NADPH--hemoprotein reductase] + H2O + H(+). It catalyses the reaction dodecan-1-ol + reduced [NADPH--hemoprotein reductase] + O2 = 1,6-dodecanediol + oxidized [NADPH--hemoprotein reductase] + H2O + H(+). In terms of biological role, self-sufficient cytochrome P450 monooxygenase that catalyzes the regioselective in-chain hydroxylation of alkanes, fatty alcohols, and fatty acids at the omega-7 position. Performs hydroxylation of C10-C16 n-alkanes and C12 and C14 fatty alcohols; and thereby enables the one step biocatalytic synthesis of rare alcohols such as 5-dodecanol and 7-tetradecanol. Converts 1-dodecanol into 1,5-dodecanediol as major product with very little sub-terminally hydroxylated products with the 1,4-dodecanediol and 1,6-dodecanediol more abundant. Converts dodecanoic acid to 5-hydroxydodecanoic acid which can be further converted into delta-dodecalactone by lactonization of the 5-hydroxy acid at low pH. Also gives sub-terminal hydroxylation of dodecanoic acid with 9-hydroxydodecanoic acid being the second most abundant product. This chain is Self-sufficient cytochrome P450 monooxygenase CYP505E1, found in Aspergillus niger (strain ATCC MYA-4892 / CBS 513.88 / FGSC A1513).